The chain runs to 321 residues: L-lactate dehydrogenase (321 aa).

NAD(+) is bound by residues Val19, Asp40, Lys45, Tyr71, and 85-86 (GA). Substrate-binding positions include Gln88, Arg94, and 126–129 (NPVD). Residues 124-126 (ATN) and Ser149 each bind NAD(+). A substrate-binding site is contributed by 154 to 157 (DTAR). Arg159 and His174 together coordinate beta-D-fructose 1,6-bisphosphate. His181 acts as the Proton acceptor in catalysis. Tyr226 is modified (phosphotyrosine). A substrate-binding site is contributed by Thr235.

This sequence belongs to the LDH/MDH superfamily. LDH family. As to quaternary structure, homotetramer.

The protein localises to the cytoplasm. It catalyses the reaction (S)-lactate + NAD(+) = pyruvate + NADH + H(+). It participates in fermentation; pyruvate fermentation to lactate; (S)-lactate from pyruvate: step 1/1. Its activity is regulated as follows. Allosterically activated by fructose 1,6-bisphosphate (FBP). Its function is as follows. Catalyzes the conversion of lactate to pyruvate. This Oceanobacillus iheyensis (strain DSM 14371 / CIP 107618 / JCM 11309 / KCTC 3954 / HTE831) protein is L-lactate dehydrogenase.